Here is a 350-residue protein sequence, read N- to C-terminus: Ferredoxin--NADP reductase (350 aa).

Residues T14, D33, Q41, Y46, A86, F121, D286, and T327 each contribute to the FAD site.

It belongs to the ferredoxin--NADP reductase type 2 family. In terms of assembly, homodimer. Requires FAD as cofactor.

The enzyme catalyses 2 reduced [2Fe-2S]-[ferredoxin] + NADP(+) + H(+) = 2 oxidized [2Fe-2S]-[ferredoxin] + NADPH. This chain is Ferredoxin--NADP reductase, found in Flavobacterium johnsoniae (strain ATCC 17061 / DSM 2064 / JCM 8514 / BCRC 14874 / CCUG 350202 / NBRC 14942 / NCIMB 11054 / UW101) (Cytophaga johnsonae).